The sequence spans 548 residues: Probable malate:quinone oxidoreductase (548 aa).

The tract at residues 521-548 (DKPQAADSTPKPQLKPQPVQKEVADIAL) is disordered. Low complexity predominate over residues 530-541 (PKPQLKPQPVQK).

Belongs to the MQO family. It depends on FAD as a cofactor.

It catalyses the reaction (S)-malate + a quinone = a quinol + oxaloacetate. The protein operates within carbohydrate metabolism; tricarboxylic acid cycle; oxaloacetate from (S)-malate (quinone route): step 1/1. The chain is Probable malate:quinone oxidoreductase from Escherichia coli (strain UTI89 / UPEC).